Here is a 303-residue protein sequence, read N- to C-terminus: Uricase (303 aa).

Alanine 2 carries the post-translational modification N-acetylalanine. 2 positions are modified to N6-acetyllysine; alternate: lysine 10 and lysine 23. N6-succinyllysine; alternate is present on residues lysine 10 and lysine 23. Lysine 23 serves as the catalytic Charge relay system. Residues lysine 27 and lysine 36 each carry the N6-acetyllysine modification. A phosphoserine mark is found at serine 39 and serine 63. Residue threonine 68 is the Charge relay system of the active site. Urate-binding residues include threonine 68 and aspartate 69. Residues lysine 118, lysine 122, and lysine 164 each carry the N6-acetyllysine modification. Phenylalanine 170 contacts urate. Lysine 175 and lysine 185 each carry N6-acetyllysine. Arginine 187 is a binding site for urate. N6-acetyllysine; alternate is present on residues lysine 220 and lysine 227. Lysine 220 and lysine 227 each carry N6-succinyllysine; alternate. Serine 231 is subject to Phosphoserine. Urate-binding residues include valine 234, glutamine 235, and asparagine 261. Histidine 263 serves as the catalytic Charge relay system. An N6-acetyllysine modification is found at lysine 277. Tyrosine 288 bears the Phosphotyrosine mark. The Microbody targeting signal motif lies at 301–303 (SRL).

The protein belongs to the uricase family. Post-translationally, acetylation of Lys-118, Lys-164 and Lys-290 is observed in liver mitochondria from fasted mice but not from fed mice. May be deacetylated by Sirt5; however it is unclear whether Sirt5 mediates deacetylation or desuccinylation of Uox; additional evidence is required to validate these results.

The protein localises to the peroxisome. It is found in the mitochondrion. The enzyme catalyses urate + O2 + H2O = 5-hydroxyisourate + H2O2. The protein operates within purine metabolism; urate degradation; (S)-allantoin from urate: step 1/3. In terms of biological role, catalyzes the oxidation of uric acid to 5-hydroxyisourate, which is further processed to form (S)-allantoin. This is Uricase (Uox) from Mus musculus (Mouse).